The following is a 201-amino-acid chain: Translation initiation factor IF-3 (201 aa).

The disordered stretch occupies residues 167–201; it reads PHRGAKTRARARHPGEPAGGPPPKPTAGDSKAAPN. Basic residues predominate over residues 169–178; the sequence is RGAKTRARAR.

It belongs to the IF-3 family. In terms of assembly, monomer.

It is found in the cytoplasm. Functionally, IF-3 binds to the 30S ribosomal subunit and shifts the equilibrium between 70S ribosomes and their 50S and 30S subunits in favor of the free subunits, thus enhancing the availability of 30S subunits on which protein synthesis initiation begins. This Mycobacterium bovis (strain ATCC BAA-935 / AF2122/97) protein is Translation initiation factor IF-3.